Reading from the N-terminus, the 612-residue chain is Autophagy-related protein 28 (612 aa).

Residues 44–72 (NHMEEQSPKFESSFPRRTSEGPVDDVGKS) are disordered. A coiled-coil region spans residues 214–296 (YQAKAQDKQA…QRTLKNECFQ (83 aa)).

This sequence belongs to the ATG28 family. In terms of assembly, interacts with ATG35.

It localises to the cytoplasm. The protein localises to the vacuole membrane. It is found in the cytoplasmic vesicle membrane. Its function is as follows. Required for the autophagic degradation of peroxisomes called pexophagy, but not essential for general autophagy. Involved in resistance to elevated pH. The sequence is that of Autophagy-related protein 28 (ATG28) from Komagataella phaffii (strain GS115 / ATCC 20864) (Yeast).